We begin with the raw amino-acid sequence, 236 residues long: tRNA (guanine-N(7)-)-methyltransferase (236 aa).

Residues glycine 54, glutamate 77–isoleucine 78, asparagine 110–alanine 111, and leucine 130 each bind S-adenosyl-L-methionine. The active site involves aspartate 133. Residue threonine 208–glutamate 210 participates in S-adenosyl-L-methionine binding.

The protein belongs to the class I-like SAM-binding methyltransferase superfamily. TrmB family.

It localises to the nucleus. The catalysed reaction is guanosine(46) in tRNA + S-adenosyl-L-methionine = N(7)-methylguanosine(46) in tRNA + S-adenosyl-L-homocysteine. The protein operates within tRNA modification; N(7)-methylguanine-tRNA biosynthesis. Catalyzes the formation of N(7)-methylguanine at position 46 (m7G46) in tRNA. The protein is tRNA (guanine-N(7)-)-methyltransferase of Bombyx mori (Silk moth).